The primary structure comprises 146 residues: NADH-quinone oxidoreductase subunit A (146 aa).

The next 3 helical transmembrane spans lie at 14–34, 68–88, and 96–116; these read FALFLIIAIGLCVFMLTGGFL, LVAMFFVIFDVEALYLYAWAV, and IGFIEATIFILVLLAGLIYLV.

This sequence belongs to the complex I subunit 3 family. In terms of assembly, NDH-1 is composed of 13 different subunits. Subunits NuoA, H, J, K, L, M, N constitute the membrane sector of the complex.

Its subcellular location is the cell inner membrane. It catalyses the reaction a quinone + NADH + 5 H(+)(in) = a quinol + NAD(+) + 4 H(+)(out). Functionally, NDH-1 shuttles electrons from NADH, via FMN and iron-sulfur (Fe-S) centers, to quinones in the respiratory chain. The immediate electron acceptor for the enzyme in this species is believed to be ubiquinone. Couples the redox reaction to proton translocation (for every two electrons transferred, four hydrogen ions are translocated across the cytoplasmic membrane), and thus conserves the redox energy in a proton gradient. This chain is NADH-quinone oxidoreductase subunit A, found in Pectobacterium atrosepticum (strain SCRI 1043 / ATCC BAA-672) (Erwinia carotovora subsp. atroseptica).